The sequence spans 404 residues: Putative CBL-interacting protein kinase 27 (404 aa).

A Protein kinase domain is found at 11-266 (YEMGRVLGHG…VAGLLETPWF (256 aa)). Residues 17–25 (LGHGNFGRV) and Lys-40 contribute to the ATP site. Asp-134 serves as the catalytic Proton acceptor. The segment at 152–181 (DFGLSALACHARPDGLLHTACGTPAYVAPE) is activation loop. The 28-residue stretch at 294 to 321 (DKDEPPEVLNAFHLISLSEGFDLSPLFE) folds into the NAF domain. Residues 335 to 356 (AGGTRFATREAASGVVARLEAL) are PPI.

Belongs to the protein kinase superfamily. CAMK Ser/Thr protein kinase family. SNF1 subfamily. Mn(2+) serves as cofactor.

The enzyme catalyses L-seryl-[protein] + ATP = O-phospho-L-seryl-[protein] + ADP + H(+). It catalyses the reaction L-threonyl-[protein] + ATP = O-phospho-L-threonyl-[protein] + ADP + H(+). Its function is as follows. CIPK serine-threonine protein kinases interact with CBL proteins. Binding of a CBL protein to the regulatory NAF domain of CIPK protein lead to the activation of the kinase in a calcium-dependent manner. This is Putative CBL-interacting protein kinase 27 (CIPK27) from Oryza sativa subsp. japonica (Rice).